Reading from the N-terminus, the 386-residue chain is Probable mannan endo-1,4-beta-mannosidase A (386 aa).

Positions M1–A21 are cleaved as a signal peptide. Residues W95 and N207 each coordinate substrate. Residue E208 is the Proton donor of the active site. Substrate is bound at residue Y283. The active-site Nucleophile is E316. N336 carries an N-linked (GlcNAc...) asparagine glycan. W346 is a binding site for substrate.

It belongs to the glycosyl hydrolase 5 (cellulase A) family.

Its subcellular location is the secreted. It catalyses the reaction Random hydrolysis of (1-&gt;4)-beta-D-mannosidic linkages in mannans, galactomannans and glucomannans.. Functionally, endo-1,4-mannanase, a crucial enzyme for depolymerization of seed galactomannans and wood galactoglucomannans. This chain is Probable mannan endo-1,4-beta-mannosidase A (manA), found in Aspergillus flavus (strain ATCC 200026 / FGSC A1120 / IAM 13836 / NRRL 3357 / JCM 12722 / SRRC 167).